The sequence spans 653 residues: PAN2-PAN3 deadenylation complex subunit PAN3 (653 aa).

2 disordered regions span residues 1-21 (MASD…ENAK) and 45-128 (HDPN…AAPD). The segment at 19 to 48 (NAKDTLCRNVTIYGRCRYEDKGCVYNHDPN) adopts a C3H1-type zinc-finger fold. Over residues 68 to 95 (SFTPSLLSSNGSSPTSSSATLKKTTTIS) the composition is skewed to low complexity. Polar residues predominate over residues 108-119 (GISSRSNASTPS). A pseudokinase domain region spans residues 256–516 (QTLPNTQLPA…TIDIFITGIS (261 aa)). ATP is bound by residues Arg-308, 357 to 364 (DYHPLSKT), and 416 to 417 (SK). Positions 517 to 555 (SQLMSTFDSALHMDDQLTSDLSRELENGRLVRLMTKLNF) form a coiled coil. The interval 556-653 (INERPEYEHD…ALLKPTRRVH (98 aa)) is knob domain.

Belongs to the protein kinase superfamily. PAN3 family. Homodimer. Forms a heterotrimer with a catalytic subunit pan2 to form the poly(A)-nuclease (PAN) deadenylation complex. Interacts (via PAM-2 motif) with poly(A)-binding protein pab1 (via PABC domain), conferring substrate specificity of the enzyme complex.

Its subcellular location is the cytoplasm. In terms of biological role, regulatory subunit of the poly(A)-nuclease (PAN) deadenylation complex, one of two cytoplasmic mRNA deadenylases involved in mRNA turnover. PAN specifically shortens poly(A) tails of RNA and the activity is stimulated by poly(A)-binding protein pab1. PAN deadenylation is followed by rapid degradation of the shortened mRNA tails by the CCR4-NOT complex. Deadenylated mRNAs are then degraded by two alternative mechanisms, namely exosome-mediated 3'-5' exonucleolytic degradation, or deadenylation-dependent mRNA decaping and subsequent 5'-3' exonucleolytic degradation by xrn1. May also be involved in post-transcriptional maturation of mRNA poly(A) tails. pan3 acts as a positive regulator for PAN activity, recruiting the catalytic subunit pan2 to mRNA via its interaction with RNA and with pab1. This chain is PAN2-PAN3 deadenylation complex subunit PAN3, found in Aspergillus terreus (strain NIH 2624 / FGSC A1156).